A 375-amino-acid polypeptide reads, in one-letter code: G-protein coupled estrogen receptor 1 (375 aa).

Methionine 1 bears the N-acetylmethionine mark. Topologically, residues 1–62 are extracellular; that stretch reads MAATTPAQDV…QQYVIALFLS (62 aa). Asparagine 32 and asparagine 44 each carry an N-linked (GlcNAc...) asparagine glycan. Residues 63-84 traverse the membrane as a helical segment; that stretch reads CLYTIFLFPIGFVGNILILVVN. The Cytoplasmic segment spans residues 85 to 96; sequence ISFREKMTIPDL. A helical membrane pass occupies residues 97–120; the sequence is YFINLAAADLILVADSLIEVFNLD. Topologically, residues 121–132 are extracellular; that stretch reads EQYYDIAVLCTF. Cysteine 130 and cysteine 207 are disulfide-bonded. Residues 133–153 form a helical membrane-spanning segment; the sequence is MSLFLQINMYSSVFFLTWMSF. At 154–175 the chain is on the cytoplasmic side; the sequence is DRYLALAKAMRCGLFRTKHHAR. The chain crosses the membrane as a helical span at residues 176–194; sequence LSCGLIWMASVSATLVPFT. Residues 195 to 220 are Extracellular-facing; sequence AVHLRHTEEACFCFADVREVQWLEVT. A helical transmembrane segment spans residues 221–236; that stretch reads LGFIVPFAIIGLCYSL. Residues 237-259 lie on the Cytoplasmic side of the membrane; that stretch reads IVRALIRAHRHRGLRPRRQKALR. A helical membrane pass occupies residues 260-280; sequence MIFAVVLVFFICWLPENVFIS. Over 281 to 306 the chain is Extracellular; that stretch reads VHLLQWAQPGDTPCKQSFRHAYPLTG. Residues 307 to 327 form a helical membrane-spanning segment; sequence HIVNLAAFSNSCLSPLIYSFL. Residues 328 to 375 lie on the Cytoplasmic side of the membrane; that stretch reads GETFRDKLRLYVAQKTSLPALNRFCHATLKAVIPDSTEQSDVKFSSAV.

The protein belongs to the G-protein coupled receptor 1 family. In terms of assembly, homodimer. Heterodimer; heterodimerizes with other G-protein-coupled receptor (GPCRs) like CRHR1, HTR1A and PAQR8. Interacts with RAMP3; the interaction confers proper subcellular localization and function in cardioprotection. Interacts with KRT7 and KRT8. Interacts with EGFR; the interaction increases after agonist-induced stimulation in cancer-associated fibroblasts (CAF). Interacts with EGFR and ESR1. Interacts (via C-terminus tail motif) with DLG4 (via N-terminus tandem pair of PDZ domains); the interaction is direct and induces the increase of GPER1 protein levels residing at the plasma membrane surface in a estradiol-independent manner. Post-translationally, ubiquitinated; ubiquitination occurs at the plasma membrane and leads to proteasome-mediated degradation. Glycosylated. In terms of tissue distribution, expressed in the brain. Expressed in neurons of the hippocampus, hypothalamic paraventricular nucleus (PVN), supraoptic nucleus (SON) and the median eminence. Expressed in magnocellular neurosecretory cells (MNCs) which secrete oxytocin but not in MNCs which secrete vasopressin. Expressed in glial cells. Expressed in the nucleus ambiguous. Expressed in epithelial cells, in pachytene spermatocytes (PS) (at protein level). Expressed strongly in vascular endothelial cells and poorly in vascular smooth muscle cells (VSMC). Expressed in the brain, lung, pituitary gland, adrenal medulla, renal pelvis and ovary. Expressed in CA1 hippocampus. Expressed weakly in heart, skeletal muscle and kidney.

It localises to the nucleus. It is found in the cytoplasm. The protein localises to the perinuclear region. Its subcellular location is the cytoskeleton. The protein resides in the cytoplasmic vesicle membrane. It localises to the cell membrane. It is found in the basolateral cell membrane. The protein localises to the endoplasmic reticulum membrane. Its subcellular location is the early endosome. The protein resides in the recycling endosome. It localises to the golgi apparatus. It is found in the trans-Golgi network. The protein localises to the golgi apparatus membrane. Its subcellular location is the cell projection. The protein resides in the dendrite. It localises to the dendritic spine membrane. It is found in the axon. The protein localises to the postsynaptic density. Its subcellular location is the mitochondrion membrane. G-protein coupled estrogen receptor that binds to 17-beta-estradiol (E2) with high affinity, leading to rapid and transient activation of numerous intracellular signaling pathways. Stimulates cAMP production, calcium mobilization and tyrosine kinase Src inducing the release of heparin-bound epidermal growth factor (HB-EGF) and subsequent transactivation of the epidermal growth factor receptor (EGFR), activating downstream signaling pathways such as PI3K/Akt and ERK/MAPK. Mediates pleiotropic functions among others in the cardiovascular, endocrine, reproductive, immune and central nervous systems. Has a role in cardioprotection by reducing cardiac hypertrophy and perivascular fibrosis in a RAMP3-dependent manner. Regulates arterial blood pressure by stimulating vasodilation and reducing vascular smooth muscle and microvascular endothelial cell proliferation. Plays a role in blood glucose homeostasis contributing to the insulin secretion response by pancreatic beta cells. Triggers mitochondrial apoptosis during pachytene spermatocyte differentiation. Stimulates uterine epithelial cell proliferation. Enhances uterine contractility in response to oxytocin. Contributes to thymic atrophy by inducing apoptosis. Attenuates TNF-mediated endothelial expression of leukocyte adhesion molecules. Promotes neuritogenesis in developing hippocampal neurons. Plays a role in acute neuroprotection against NMDA-induced excitotoxic neuronal death. Increases firing activity and intracellular calcium oscillations in luteinizing hormone-releasing hormone (LHRH) neurons. Inhibits early osteoblast proliferation at growth plate during skeletal development. Inhibits mature adipocyte differentiation and lipid accumulation. Involved in the recruitment of beta-arrestin 2 ARRB2 at the plasma membrane in epithelial cells. Also functions as a receptor for aldosterone mediating rapid regulation of vascular contractibility through the PI3K/ERK signaling pathway. Involved in cancer progression regulation. Stimulates cancer-associated fibroblast (CAF) proliferation by a rapid genomic response through the EGFR/ERK transduction pathway. Associated with EGFR, may act as a transcription factor activating growth regulatory genes (c-fos, cyclin D1). Promotes integrin alpha-5/beta-1 and fibronectin (FN) matrix assembly in breast cancer cells. This is G-protein coupled estrogen receptor 1 (Gper1) from Rattus norvegicus (Rat).